Reading from the N-terminus, the 244-residue chain is Ribosomal RNA small subunit methyltransferase G (244 aa).

S-adenosyl-L-methionine-binding positions include Gly-79, Phe-84, 130 to 131 (AE), and Arg-150. The segment at 221–244 (KKPSPKRYPRKPGTPAKQPLTAPM) is disordered.

It belongs to the methyltransferase superfamily. RNA methyltransferase RsmG family.

Its subcellular location is the cytoplasm. Its function is as follows. Specifically methylates the N7 position of a guanine in 16S rRNA. The sequence is that of Ribosomal RNA small subunit methyltransferase G from Lactiplantibacillus plantarum (strain ATCC BAA-793 / NCIMB 8826 / WCFS1) (Lactobacillus plantarum).